Here is a 114-residue protein sequence, read N- to C-terminus: MTEVKLDFQKQGGLIPAIILDHTSKEVIMLAYLNEEAYQLTRTSGQMWYWSRSRQELWHKGATSGHYQTVKKITADCDQDTLLIEVDQLGAACHTGSKSCFFHIIWDEEDSKTD.

Residue aspartate 76 coordinates Mg(2+). A Zn(2+)-binding site is contributed by cysteine 77. Mg(2+) is bound by residues aspartate 78 and aspartate 80. Zn(2+) contacts are provided by cysteine 93 and cysteine 100.

Belongs to the PRA-CH family. In terms of assembly, homodimer. Mg(2+) is required as a cofactor. Requires Zn(2+) as cofactor.

The protein localises to the cytoplasm. The enzyme catalyses 1-(5-phospho-beta-D-ribosyl)-5'-AMP + H2O = 1-(5-phospho-beta-D-ribosyl)-5-[(5-phospho-beta-D-ribosylamino)methylideneamino]imidazole-4-carboxamide. The protein operates within amino-acid biosynthesis; L-histidine biosynthesis; L-histidine from 5-phospho-alpha-D-ribose 1-diphosphate: step 3/9. In terms of biological role, catalyzes the hydrolysis of the adenine ring of phosphoribosyl-AMP. This chain is Phosphoribosyl-AMP cyclohydrolase, found in Streptococcus gordonii (strain Challis / ATCC 35105 / BCRC 15272 / CH1 / DL1 / V288).